Here is a 286-residue protein sequence, read N- to C-terminus: Citrullinase (286 aa).

The CN hydrolase domain occupies 4 to 258 (IKVAVVQLSF…DDILYATFDF (255 aa)). The active-site Proton acceptor is the E43. Residue K116 is part of the active site. The Nucleophile role is filled by C153.

It belongs to the carbon-nitrogen hydrolase superfamily.

It carries out the reaction L-citrulline + H2O + 2 H(+) = L-ornithine + NH4(+) + CO2. Its function is as follows. Catalyzes the degradation of citrulline into ornithine, carbon dioxide and ammonia. Contributes to intramacrophage survival, in vivo growth and pathogenesis. The sequence is that of Citrullinase from Francisella tularensis subsp. tularensis (strain SCHU S4 / Schu 4).